Reading from the N-terminus, the 565-residue chain is Sulfite reductase [NADPH] hemoprotein beta-component (565 aa).

4 residues coordinate [4Fe-4S] cluster: cysteine 429, cysteine 435, cysteine 474, and cysteine 478. Residue cysteine 478 coordinates siroheme.

The protein belongs to the nitrite and sulfite reductase 4Fe-4S domain family. Alpha(8)-beta(8). The alpha component is a flavoprotein, the beta component is a hemoprotein. The cofactor is siroheme. Requires [4Fe-4S] cluster as cofactor.

It carries out the reaction hydrogen sulfide + 3 NADP(+) + 3 H2O = sulfite + 3 NADPH + 4 H(+). It participates in sulfur metabolism; hydrogen sulfide biosynthesis; hydrogen sulfide from sulfite (NADPH route): step 1/1. Functionally, component of the sulfite reductase complex that catalyzes the 6-electron reduction of sulfite to sulfide. This is one of several activities required for the biosynthesis of L-cysteine from sulfate. This Shewanella baltica (strain OS185) protein is Sulfite reductase [NADPH] hemoprotein beta-component.